Consider the following 335-residue polypeptide: Histidinol-phosphate aminotransferase (335 aa).

K202 bears the N6-(pyridoxal phosphate)lysine mark.

It belongs to the class-II pyridoxal-phosphate-dependent aminotransferase family. Histidinol-phosphate aminotransferase subfamily. As to quaternary structure, homodimer. Requires pyridoxal 5'-phosphate as cofactor.

The enzyme catalyses L-histidinol phosphate + 2-oxoglutarate = 3-(imidazol-4-yl)-2-oxopropyl phosphate + L-glutamate. It functions in the pathway amino-acid biosynthesis; L-histidine biosynthesis; L-histidine from 5-phospho-alpha-D-ribose 1-diphosphate: step 7/9. In Thermotoga neapolitana (strain ATCC 49049 / DSM 4359 / NBRC 107923 / NS-E), this protein is Histidinol-phosphate aminotransferase.